The sequence spans 1172 residues: Lysylphosphatidylglycerol biosynthesis bifunctional protein LysX (1172 aa).

Residues 1–34 (MGLHLTVPGLRRDGRGVQSNSHDTSSKTTADISR) form a disordered region. Positions 1-663 (MGLHLTVPGL…LLHHDGSAPD (663 aa)) are phosphatidylglycerol lysyltransferase. Polar residues predominate over residues 17–31 (VQSNSHDTSSKTTAD). 7 helical membrane-spanning segments follow: residues 80–100 (VPAA…LASV), 122–142 (FPDT…ALTA), 146–166 (IAWL…AAEI), 177–197 (FGEN…VLGY), 214–234 (AVWL…VELF), 272–292 (AIFG…LFLS), and 612–632 (VIPR…LPFS). The segment at 664–1172 (VSGLRQVGLT…TLPFPLAKPH (509 aa)) is lysine--tRNA ligase. A DNA-binding region (OB) is located at residues 726–804 (VSVSGRIMRI…SLIVSGWRLI (79 aa)). Residues aspartate 1084 and glutamate 1091 each contribute to the Mg(2+) site.

In the N-terminal section; belongs to the LPG synthetase family. This sequence in the C-terminal section; belongs to the class-II aminoacyl-tRNA synthetase family. Mg(2+) is required as a cofactor.

It localises to the cell membrane. It catalyses the reaction tRNA(Lys) + L-lysine + ATP = L-lysyl-tRNA(Lys) + AMP + diphosphate. The enzyme catalyses L-lysyl-tRNA(Lys) + a 1,2-diacyl-sn-glycero-3-phospho-(1'-sn-glycerol) = a 1,2-diacyl-sn-glycero-3-phospho-1'-(3'-O-L-lysyl)-sn-glycerol + tRNA(Lys). In terms of biological role, catalyzes the production of L-lysyl-tRNA(Lys)transfer and the transfer of a lysyl group from L-lysyl-tRNA(Lys) to membrane-bound phosphatidylglycerol (PG), which produces lysylphosphatidylglycerol (LPG), one of the components of the bacterial membrane with a positive net charge. LPG synthesis contributes to the resistance to cationic antimicrobial peptides (CAMPs) and likely protects M.tuberculosis against the CAMPs produced by competiting microorganisms (bacteriocins). In fact, the modification of anionic phosphatidylglycerol with positively charged L-lysine results in repulsion of the peptides. This Mycobacterium bovis (strain ATCC BAA-935 / AF2122/97) protein is Lysylphosphatidylglycerol biosynthesis bifunctional protein LysX (lysX).